The primary structure comprises 378 residues: MTTEEESLSAAEEGYNVQRDYWRQAEESDGFDIENIKLPPGMHGRVMGLITYNCQLCYRYPFPVLVKLYAKFGLHRYNLIKGTSFELAALMKFNMLQNYMSSFYMTLLAHDPDPAASSSQKTFQVRVDEQQFGTLGINCSIARPKHEGDLLEVSTKTPFIPHFHGGALGDGIFKGELPDCLSDDALNALMEAVSKDELPEHVLDDALYARAGGIFQGELPDWPSDDALNDGKRFYMLKESEWQATDWISMYLELVITTTDRSITETVQKPEVLSKLEIVKVAIETATKDEEPSNERLKAYRAHFYITFKGLAEPRAPRQVFEIGEHVERQAIVRRVMGHRGDLTLKGKLCGGQYIKRRSLALKSGEESPNCKKQTRVG.

It belongs to the UPF0725 (EMB2204) family.

This Arabidopsis thaliana (Mouse-ear cress) protein is UPF0725 protein At1g23970.